Consider the following 310-residue polypeptide: Terpene synthase 6 (310 aa).

Positions 93-98 match the DDxx(x)D/E motif motif; sequence DDFYFE. The NDxxSxxxD/E motif signature appears at 222 to 230; that stretch reads NDCYSFNKE.

This sequence belongs to the terpene synthase family.

The enzyme catalyses (2E,6E)-farnesyl diphosphate = (E)-beta-farnesene + diphosphate. It catalyses the reaction (2E,6E)-farnesyl diphosphate = (1S,2S,4R)-beta-elemene + diphosphate. The catalysed reaction is (2E,6E)-farnesyl diphosphate = (3E,6E)-alpha-farnesene + diphosphate. Its function is as follows. Terpene synthase that converts its substrate farnesyl diphosphate (FPP) into the sesquiterpenes beta-elemene, (E)-beta-farnesene and (E,E)-alpha-farnesene. This is Terpene synthase 6 from Dictyostelium purpureum (Slime mold).